A 324-amino-acid chain; its full sequence is MQTVTLSIFRFNEFEKRLWVLGQMTANKLGMHYLPKAKFWKMFGSGTGQGFTPKPNWHVWSILAVWPDEETARREVAESPIYQRWTKMADESYTVLLQPTSAWGKWDGKEPFEPVKPASDVRPIAALTRATVKFWKAERFWAREPAISHMIGRNKDVVFKIGVGEVPFVQQVTFSIWPDARSMEEFARGAGGPHGEAIKAVRAENWFKEELYARFQILGTIGKWEGKDPVGEALTARPSEAPKPAPAPAAAQPAPAAEAPKPAPAPVAEKPALAVEMPKPAEPPKPVVEAPKPASAPVASKPMPQGGKPNFKGKPGKGGRKENA.

The disordered stretch occupies residues 226 to 324; sequence GKDPVGEALT…PGKGGRKENA (99 aa). Low complexity-rich tracts occupy residues 248-278 and 287-313; these read PAAA…VEMP and VVEA…NFKG.

Belongs to the CrtA family. The cofactor is heme.

It carries out the reaction spheroidene + 4 reduced [2Fe-2S]-[ferredoxin] + 2 O2 + 4 H(+) = spheroiden-2-one + 4 oxidized [2Fe-2S]-[ferredoxin] + 3 H2O. It catalyses the reaction spheroidene + 2 reduced [2Fe-2S]-[ferredoxin] + O2 + 2 H(+) = 2-hydroxyspheroidene + 2 oxidized [2Fe-2S]-[ferredoxin] + H2O. The enzyme catalyses 2-hydroxyspheroidene + 2 reduced [2Fe-2S]-[ferredoxin] + O2 + 2 H(+) = 2,2-dihydroxyspheroidene + 2 oxidized [2Fe-2S]-[ferredoxin] + H2O. The catalysed reaction is 2,2-dihydroxyspheroidene = spheroiden-2-one + H2O. It participates in carotenoid biosynthesis; spheroidene biosynthesis. Functionally, involved in the biosynthesis of the carotenoid spheroidene. Catalyzes the introduction of one keto group at the C-2 position of spheroidene. In vitro, can use nonnative substrates and produce oxocarotenoids with a hydroxy and/or a keto group, derived from neurosporene, lycopene, 3,4-didehydrolycopene or 3,4,3',4'-tetradehydrolycopene. This Cereibacter sphaeroides (strain ATCC 17023 / DSM 158 / JCM 6121 / CCUG 31486 / LMG 2827 / NBRC 12203 / NCIMB 8253 / ATH 2.4.1.) (Rhodobacter sphaeroides) protein is Spheroidene monooxygenase.